Consider the following 87-residue polypeptide: Large ribosomal subunit protein bL27 (87 aa).

The protein belongs to the bacterial ribosomal protein bL27 family.

This Phocaeicola vulgatus (strain ATCC 8482 / DSM 1447 / JCM 5826 / CCUG 4940 / NBRC 14291 / NCTC 11154) (Bacteroides vulgatus) protein is Large ribosomal subunit protein bL27.